Here is a 590-residue protein sequence, read N- to C-terminus: Cell division protein FtsZ 1 (590 aa).

Residues Gly-24–Asn-28, Gly-111–Gly-113, Glu-142, Arg-146, and Asp-190 contribute to the GTP site. Disordered stretches follow at residues Ala-346–Gln-372 and Glu-524–Ser-590. The span at Ala-534 to Pro-546 shows a compositional bias: low complexity. Positions Gly-559–Asp-576 are enriched in basic and acidic residues.

It belongs to the FtsZ family. In terms of assembly, homodimer. Polymerizes to form a dynamic ring structure in a strictly GTP-dependent manner. Interacts directly with several other division proteins.

It is found in the cytoplasm. In terms of biological role, essential cell division protein that forms a contractile ring structure (Z ring) at the future cell division site. The regulation of the ring assembly controls the timing and the location of cell division. One of the functions of the FtsZ ring is to recruit other cell division proteins to the septum to produce a new cell wall between the dividing cells. Binds GTP and shows GTPase activity. The chain is Cell division protein FtsZ 1 from Rhizobium meliloti (strain 1021) (Ensifer meliloti).